The following is a 65-amino-acid chain: Small ribosomal subunit protein eS27 (65 aa).

Cysteine 20, cysteine 23, cysteine 39, and cysteine 42 together coordinate Zn(2+). A C4-type zinc finger spans residues 20 to 42 (CIDCGNEQIVFSHPATPVRCLVC).

It belongs to the eukaryotic ribosomal protein eS27 family. In terms of assembly, part of the 30S ribosomal subunit. Requires Zn(2+) as cofactor.

This chain is Small ribosomal subunit protein eS27, found in Thermococcus kodakarensis (strain ATCC BAA-918 / JCM 12380 / KOD1) (Pyrococcus kodakaraensis (strain KOD1)).